The sequence spans 537 residues: Chaperonin GroEL 1 (537 aa).

ATP contacts are provided by residues 29–32 (TLGP), 86–90 (DGTTT), Gly-413, 478–480 (NAA), and Asp-494.

It belongs to the chaperonin (HSP60) family. As to quaternary structure, forms a cylinder of 14 subunits composed of two heptameric rings stacked back-to-back. Interacts with the co-chaperonin GroES.

It localises to the cytoplasm. The enzyme catalyses ATP + H2O + a folded polypeptide = ADP + phosphate + an unfolded polypeptide.. In terms of biological role, together with its co-chaperonin GroES, plays an essential role in assisting protein folding. The GroEL-GroES system forms a nano-cage that allows encapsulation of the non-native substrate proteins and provides a physical environment optimized to promote and accelerate protein folding. The protein is Chaperonin GroEL 1 of Corynebacterium efficiens (strain DSM 44549 / YS-314 / AJ 12310 / JCM 11189 / NBRC 100395).